The primary structure comprises 316 residues: Biotin synthase (316 aa).

The Radical SAM core domain occupies 36 to 264 (FDNRITLCAI…TATLRICGGR (229 aa)). Residues Cys-53, Cys-57, and Cys-60 each coordinate [4Fe-4S] cluster. Residues Cys-129, Cys-189, and Arg-259 each coordinate [2Fe-2S] cluster.

Belongs to the radical SAM superfamily. Biotin synthase family. In terms of assembly, homodimer. [4Fe-4S] cluster serves as cofactor. The cofactor is [2Fe-2S] cluster.

The enzyme catalyses (4R,5S)-dethiobiotin + (sulfur carrier)-SH + 2 reduced [2Fe-2S]-[ferredoxin] + 2 S-adenosyl-L-methionine = (sulfur carrier)-H + biotin + 2 5'-deoxyadenosine + 2 L-methionine + 2 oxidized [2Fe-2S]-[ferredoxin]. It participates in cofactor biosynthesis; biotin biosynthesis; biotin from 7,8-diaminononanoate: step 2/2. In terms of biological role, catalyzes the conversion of dethiobiotin (DTB) to biotin by the insertion of a sulfur atom into dethiobiotin via a radical-based mechanism. The chain is Biotin synthase from Desulfovibrio desulfuricans (strain ATCC 27774 / DSM 6949 / MB).